The following is a 351-amino-acid chain: uncharacterized protein (351 aa).

The Mn(2+) site is built by aspartate 215, aspartate 226, histidine 290, glutamate 319, and glutamate 333.

It belongs to the peptidase M24B family. Mn(2+) serves as cofactor.

This is an uncharacterized protein from Staphylococcus aureus (strain MW2).